A 188-amino-acid chain; its full sequence is Putative manganese efflux pump MntP (188 aa).

6 helical membrane passes run 3–23, 39–59, 65–85, 110–130, 131–151, and 167–187; these read LFSLWVMAFGLSMDAFAVSIC, AGLYFGLFQAVMPLIGFLLGV, ITDYDHWVAFFLLALIGVNML, LGFATSIDALAVGVTFAFLSV, DIYSSVVTIGLITAALSIIGV, and ILGGLILIGLGVKILMEHTLF.

It belongs to the MntP (TC 9.B.29) family.

Its subcellular location is the cell inner membrane. Probably functions as a manganese efflux pump. This Mannheimia succiniciproducens (strain KCTC 0769BP / MBEL55E) protein is Putative manganese efflux pump MntP.